Consider the following 581-residue polypeptide: Adenine deaminase (581 aa).

This sequence belongs to the metallo-dependent hydrolases superfamily. Adenine deaminase family. The cofactor is Mn(2+).

It carries out the reaction adenine + H2O + H(+) = hypoxanthine + NH4(+). This is Adenine deaminase from Brucella abortus (strain 2308).